Reading from the N-terminus, the 233-residue chain is Charged multivesicular body protein 4c (233 aa).

Disordered stretches follow at residues 1–24 (MSKL…SPQE) and 173–233 (QEEL…AWAT). Residues 1-153 (MSKLGKFFKG…EISEAFSQRV (153 aa)) are intramolecular interaction with C-terminus. A coiled-coil region spans residues 125–183 (LNKIDDLMQEITEQQDIAQEISEAFSQRVGFGDDFDEDELMAELEELEQEELNKKMTNI). Residues 154-233 (GFGDDFDEDE…DIKQLAAWAT (80 aa)) form an intramolecular interaction with N-terminus region. The segment covering 204 to 216 (SSTARRSRAASSQ) has biased composition (low complexity). Position 210 is a phosphoserine; by AURKB (Ser-210).

The protein belongs to the SNF7 family. As to quaternary structure, probable core component of the endosomal sorting required for transport complex III (ESCRT-III). ESCRT-III components are thought to multimerize to form a flat lattice on the perimeter membrane of the endosome. Several assembly forms of ESCRT-III may exist that interact and act sequentially. Self-associates. Interacts with CHMP2A. Interacts with CHMP4A. Interacts with CHMP4B. Interacts with CHMP6. Interacts with VPS4A. Interacts with PDCD6IP; the interaction is direct. Phosphorylated at Ser-210 by AURKB during cytokinesis: together with ZFYVE19/ANCHR, phosphorylated CHMP4C retains abscission-competent VPS4 (VPS4A and/or VPS4B) at the midbody ring until abscission checkpoint signaling is terminated at late cytokinesis. As to expression, expressed in heart, spleen and kidney.

The protein resides in the cytoplasm. The protein localises to the cytosol. It is found in the late endosome membrane. Its subcellular location is the midbody. It localises to the midbody ring. In terms of biological role, probable core component of the endosomal sorting required for transport complex III (ESCRT-III) which is involved in multivesicular bodies (MVBs) formation and sorting of endosomal cargo proteins into MVBs. MVBs contain intraluminal vesicles (ILVs) that are generated by invagination and scission from the limiting membrane of the endosome and mostly are delivered to lysosomes enabling degradation of membrane proteins, such as stimulated growth factor receptors, lysosomal enzymes and lipids. The MVB pathway appears to require the sequential function of ESCRT-O, -I,-II and -III complexes. ESCRT-III proteins mostly dissociate from the invaginating membrane before the ILV is released. The ESCRT machinery also functions in topologically equivalent membrane fission events, such as the terminal stages of cytokinesis and the budding of enveloped viruses (HIV-1 and other lentiviruses). Key component of the cytokinesis checkpoint, a process required to delay abscission to prevent both premature resolution of intercellular chromosome bridges and accumulation of DNA damage: upon phosphorylation by AURKB, together with ZFYVE19/ANCHR, retains abscission-competent VPS4 (VPS4A and/or VPS4B) at the midbody ring until abscission checkpoint signaling is terminated at late cytokinesis. Deactivation of AURKB results in dephosphorylation of CHMP4C followed by its dissociation from ANCHR and VPS4 and subsequent abscission. ESCRT-III proteins are believed to mediate the necessary vesicle extrusion and/or membrane fission activities, possibly in conjunction with the AAA ATPase VPS4. Involved in HIV-1 p6- and p9-dependent virus release. CHMP4A/B/C are required for the exosomal release of SDCBP, CD63 and syndecan. This is Charged multivesicular body protein 4c (CHMP4C) from Homo sapiens (Human).